The primary structure comprises 179 residues: ATP-dependent protease subunit HslV (179 aa).

Residue T7 is part of the active site. Residues G162, C165, and T168 each coordinate Na(+).

This sequence belongs to the peptidase T1B family. HslV subfamily. A double ring-shaped homohexamer of HslV is capped on each side by a ring-shaped HslU homohexamer. The assembly of the HslU/HslV complex is dependent on binding of ATP.

The protein localises to the cytoplasm. The enzyme catalyses ATP-dependent cleavage of peptide bonds with broad specificity.. Its activity is regulated as follows. Allosterically activated by HslU binding. Protease subunit of a proteasome-like degradation complex believed to be a general protein degrading machinery. In Bordetella avium (strain 197N), this protein is ATP-dependent protease subunit HslV.